The chain runs to 498 residues: Glycerol kinase (498 aa).

ADP is bound at residue threonine 14. 3 residues coordinate ATP: threonine 14, threonine 15, and serine 16. Threonine 14 serves as a coordination point for sn-glycerol 3-phosphate. Arginine 18 is an ADP binding site. Arginine 84, glutamate 85, and tyrosine 136 together coordinate sn-glycerol 3-phosphate. 3 residues coordinate glycerol: arginine 84, glutamate 85, and tyrosine 136. The residue at position 232 (histidine 232) is a Phosphohistidine; by HPr. Aspartate 246 is a sn-glycerol 3-phosphate binding site. Residues aspartate 246 and glutamine 247 each contribute to the glycerol site. 2 residues coordinate ADP: threonine 268 and glycine 311. Threonine 268, glycine 311, glutamine 315, and glycine 412 together coordinate ATP. 2 residues coordinate ADP: glycine 412 and asparagine 416.

This sequence belongs to the FGGY kinase family. Homotetramer and homodimer (in equilibrium). In terms of processing, the phosphoenolpyruvate-dependent sugar phosphotransferase system (PTS), including enzyme I, and histidine-containing protein (HPr) are required for the phosphorylation, which leads to the activation of the enzyme.

The catalysed reaction is glycerol + ATP = sn-glycerol 3-phosphate + ADP + H(+). It participates in polyol metabolism; glycerol degradation via glycerol kinase pathway; sn-glycerol 3-phosphate from glycerol: step 1/1. With respect to regulation, activated by phosphorylation and inhibited by fructose 1,6-bisphosphate (FBP). Its function is as follows. Key enzyme in the regulation of glycerol uptake and metabolism. Catalyzes the phosphorylation of glycerol to yield sn-glycerol 3-phosphate. The polypeptide is Glycerol kinase (Lactococcus lactis subsp. lactis (strain IL1403) (Streptococcus lactis)).